We begin with the raw amino-acid sequence, 472 residues long: Membrane-bound acylglycerophosphatidylinositol O-acyltransferase MBOAT7 (472 aa).

Topologically, residues 1 to 5 (MSPEE) are cytoplasmic. Residues 6-22 (WTYLVVLLISIPIGFLF) traverse the membrane as a helical segment. The Lumenal portion of the chain corresponds to 23–33 (KKAGPGLKRWG). Residues 34-57 (AAAVGLGLTLFTCGPHTLHSLVTI) form a helical membrane-spanning segment. The Cytoplasmic segment spans residues 58 to 73 (LGTWALIQAQPCSCHA). A helical transmembrane segment spans residues 74–93 (LALAWTFSYLLFFRALSLLG). Residues 94 to 194 (LPTPTPFTNA…VPSLRPLLRR (101 aa)) are Lumenal-facing. A helical membrane pass occupies residues 195-212 (AWPAPLFGLLFLLSSHLF). At 213–231 (PLEAVREDAFYARPLPARL) the chain is on the cytoplasmic side. Residues 232-261 (FYMIPVFFAFRMRFYVAWIAAECGCIAAGF) form a helical membrane-spanning segment. Topologically, residues 262-426 (GAYPVAAKAR…LSLRDTLRYW (165 aa)) are lumenal. Asn321 carries N-linked (GlcNAc...) asparagine glycosylation. A helical membrane pass occupies residues 427–447 (ASVYFCVHVLALAALGLGLAL). Residues 448 to 472 (GRGGPGRRKSGAPAPSPASGKLREE) lie on the Cytoplasmic side of the membrane. The interval 450 to 472 (GGPGRRKSGAPAPSPASGKLREE) is disordered.

Belongs to the membrane-bound acyltransferase family. In terms of assembly, interacts with SPTSSA; the interaction facilitates MBOAT7 location to mitochondria-associated membranes (MAMs).

It localises to the endoplasmic reticulum membrane. The catalysed reaction is a 1-acyl-sn-glycero-3-phospho-(1D-myo-inositol) + an acyl-CoA = a 1,2-diacyl-sn-glycero-3-phospho-(1D-myo-inositol) + CoA. It catalyses the reaction a 1-acyl-sn-glycero-3-phospho-(1D-myo-inositol) + (5Z,8Z,11Z,14Z)-eicosatetraenoyl-CoA = a 1-acyl-2-(5Z,8Z,11Z,14Z-eicosatetraenoyl)-sn-glycero-3-phospho-(1D-myo-inositol) + CoA. The enzyme catalyses (5Z,8Z,11Z,14Z)-eicosatetraenoyl-CoA + 1-hexadecanoyl-sn-glycero-3-phosphocholine = 1-hexadecanoyl-2-(5Z,8Z,11Z,14Z-eicosatetraenoyl)-sn-glycero-3-phosphocholine + CoA. It carries out the reaction 1-octadecanoyl-sn-glycero-3-phospho-(1D-myo-inositol) + (5Z,8Z,11Z,14Z)-eicosatetraenoyl-CoA = 1-octadecanoyl-2-(5Z,8Z,11Z,14Z-eicosatetraenoyl)-sn-glycero-3-phospho-(1D-myo-inositol) + CoA. Its pathway is lipid metabolism; phospholipid metabolism. Functionally, acyltransferase which catalyzes the transfer of an acyl group from an acyl-CoA to a lysophosphatidylinositol (1-acylglycerophosphatidylinositol or LPI) leading to the production of a phosphatidylinositol (1,2-diacyl-sn-glycero-3-phosphoinositol or PI) and participates in the reacylation step of the phospholipid remodeling pathway also known as the Lands cycle. Prefers arachidonoyl-CoA as the acyl donor, thus contributing to the regulation of free levels arachidonic acid in cell. In liver, participates in the regulation of triglyceride metabolism through the phosphatidylinositol acyl-chain remodeling regulation. The protein is Membrane-bound acylglycerophosphatidylinositol O-acyltransferase MBOAT7 (MBOAT7) of Bos taurus (Bovine).